The sequence spans 518 residues: Glutamate--cysteine ligase (518 aa).

Belongs to the glutamate--cysteine ligase type 1 family. Type 1 subfamily.

It catalyses the reaction L-cysteine + L-glutamate + ATP = gamma-L-glutamyl-L-cysteine + ADP + phosphate + H(+). It functions in the pathway sulfur metabolism; glutathione biosynthesis; glutathione from L-cysteine and L-glutamate: step 1/2. In Salmonella paratyphi C (strain RKS4594), this protein is Glutamate--cysteine ligase.